We begin with the raw amino-acid sequence, 90 residues long: Probable Fe(2+)-trafficking protein (90 aa).

The protein belongs to the Fe(2+)-trafficking protein family.

In terms of biological role, could be a mediator in iron transactions between iron acquisition and iron-requiring processes, such as synthesis and/or repair of Fe-S clusters in biosynthetic enzymes. The sequence is that of Probable Fe(2+)-trafficking protein from Acidovorax ebreus (strain TPSY) (Diaphorobacter sp. (strain TPSY)).